Here is a 289-residue protein sequence, read N- to C-terminus: Ribosome-inactivating protein alpha-trichosanthin (289 aa).

The signal sequence occupies residues 1 to 23 (MIRFLVLSLLILTLFLTTPAVEG). E183 is a catalytic residue. The propeptide at 271 to 289 (AMDDDVPMTQSFGCGSYAI) is removed in mature form.

It belongs to the ribosome-inactivating protein family. Type 1 RIP subfamily.

It carries out the reaction Endohydrolysis of the N-glycosidic bond at one specific adenosine on the 28S rRNA.. Its function is as follows. Inactivates eukaryotic 60S ribosomal subunits. In Trichosanthes kirilowii (Chinese snake gourd), this protein is Ribosome-inactivating protein alpha-trichosanthin.